The chain runs to 331 residues: Heat-inducible transcription repressor HrcA (331 aa).

The protein belongs to the HrcA family.

Functionally, negative regulator of class I heat shock genes (grpE-dnaK-dnaJ and groELS operons). Prevents heat-shock induction of these operons. The polypeptide is Heat-inducible transcription repressor HrcA (Synechococcus sp. (strain WH7803)).